The sequence spans 1179 residues: Golgi apparatus protein 1 (1179 aa).

An N-terminal signal peptide occupies residues 1 to 29 (MAACGRVRRMFRLSAALHLLLLFAAGAEK). Over 30 to 1145 (LPGQGVHSQG…MQVMTSPSKN (1116 aa)) the chain is Extracellular. Positions 32–112 (GQGVHSQGQG…GAGAGGGWKL (81 aa)) are disordered. Positions 60 to 84 (GQQLPQLPQSSQLQQQQQQQQQQQQ) are enriched in low complexity. Pro residues predominate over residues 85–96 (PQPPQPPFPAGG). Cys-rich GLG1 repeat units follow at residues 116–149 (ESCR…EPEN), 150–212 (EISS…GNIT), 215–278 (QCHQ…VKEA), 286–346 (QVSE…FEES), 347–413 (MSEK…HRGR), 414–473 (QVSS…RGEK), 475–537 (NLGM…YTEK), 538–604 (MVED…YRTE), 609–668 (RLSR…DDLV), 670–728 (ECRD…KHQK), 729–788 (DMNE…RNDT), 796–856 (RVSL…KQLS), 858–911 (RCHQ…KNSE), 912–979 (LMDP…ADQR), 980–1035 (LSSD…ECLK), and 1041–1101 (IKTE…EDKR). Asn165 and Asn210 each carry an N-linked (GlcNAc...) asparagine glycan. A glycan (N-linked (GlcNAc...) asparagine) is linked at Asn581. Asn677 and Asn786 each carry an N-linked (GlcNAc...) asparagine glycan. Ser961 carries the post-translational modification Phosphoserine. A helical membrane pass occupies residues 1146 to 1166 (YILSVISGSICILFLIGLMCG). The Cytoplasmic portion of the chain corresponds to 1167–1179 (RITKRVTRELKDR).

In terms of processing, fucosylation is essential for binding to E-selectin. N-glycosylated. Contains sialic acid residues. In terms of tissue distribution, widely expressed. Highest levels in pancreas, skeletal muscle, placenta, heart, testis and ovary. Also found in the kidney, liver, lung and brain.

Its subcellular location is the golgi apparatus membrane. The protein resides in the golgi outpost. It is found in the cytoplasm. It localises to the cytoskeleton. The protein localises to the microtubule organizing center. Binds fibroblast growth factor and E-selectin (cell-adhesion lectin on endothelial cells mediating the binding of neutrophils). This is Golgi apparatus protein 1 (GLG1) from Homo sapiens (Human).